The sequence spans 150 residues: Large ribosomal subunit protein bL9 (150 aa).

The protein belongs to the bacterial ribosomal protein bL9 family.

Binds to the 23S rRNA. The chain is Large ribosomal subunit protein bL9 from Neisseria meningitidis serogroup C / serotype 2a (strain ATCC 700532 / DSM 15464 / FAM18).